A 2696-amino-acid chain; its full sequence is Histone-lysine N-methyltransferase, H3 lysine-36 specific (2696 aa).

Phosphoserine is present on Ser-117. Disordered stretches follow at residues 207–252 (MGSE…EKAA) and 281–311 (DPDSSTSTLGNMLELPGTSSSSTSQELPFCQ). A compositionally biased stretch (basic and acidic residues) spans 236–248 (QKNKQRNEVDGSN). 2 stretches are compositionally biased toward polar residues: residues 281–290 (DPDSSTSTLG) and 297–306 (GTSSSSTSQE). The 66-residue stretch at 323–388 (VGDLIWAKFK…AGKAIVMFEG (66 aa)) folds into the PWWP 1 domain. Residues Ser-483 and Ser-486 each carry the phosphoserine modification. The segment at 487–514 (ADEKEKPCAKSRARKSSDNPKRTSVKKG) is disordered. Ser-766 carries the phosphoserine modification. The interval 872–891 (LGEDVSDSGTSKPSKPLLFS) is disordered. Lys-906 participates in a covalent cross-link: Glycyl lysine isopeptide (Lys-Gly) (interchain with G-Cter in SUMO2). Disordered stretches follow at residues 936 to 1035 (YRSP…DAFS), 1067 to 1093 (VLQGDRERGGSLRGGAEDPSKEDPLQI), 1112 to 1134 (SKVKQSDPGKISEKGLSFENGKG), 1243 to 1272 (SIGDMEKEPGIPSLTPQAELPEPAVRSEKK), 1294 to 1344 (PKKK…EPPV), 1382 to 1428 (SPRP…KKGD), and 1480 to 1534 (KMQC…MQGE). Positions 948–961 (SPVGVSKVLVSGGS) are enriched in low complexity. Polar residues predominate over residues 971 to 982 (GTQNSANPSPSG). 3 stretches are compositionally biased toward basic and acidic residues: residues 1000-1017 (SDKRDLPASGKSRSDCVT), 1070-1090 (GDRERGGSLRGGAEDPSKEDP), and 1112-1124 (SKVKQSDPGKISE). Residues 1300–1314 (KVQEQVHKVSSRCEE) show a composition bias toward basic and acidic residues. The span at 1323–1337 (SSAQNKQVDENSLIS) shows a compositional bias: polar residues. Lys-1339 participates in a covalent cross-link: Glycyl lysine isopeptide (Lys-Gly) (interchain with G-Cter in SUMO2). Ser-1510 bears the Phosphoserine mark. Residues 1513-1523 (ETVEEGVEHDP) are compositionally biased toward basic and acidic residues. 3 consecutive PHD-type zinc fingers follow at residues 1543 to 1589 (ENVC…CRTG), 1590 to 1646 (IHTC…CHAA), and 1707 to 1751 (VSWC…CKAG). The PWWP 2 domain maps to 1756 to 1818 (YREIVWVKVG…QARVFPYMEG (63 aa)). An AWS domain is found at 1890-1940 (SEIPRCNCKATDENPCGIDSECINRMLLYECHPTVCPAGGRCQNQCFSKRQ). The SET domain maps to 1942–2059 (PEVEIFRTLQ…AGTELTFNYN (118 aa)). Residues 1952–1954 (RGW), 1994–1997 (TNFY), 2020–2021 (NH), Asn-2065, and Lys-2071 each bind S-adenosyl-L-methionine. The tract at residues 2060 to 2066 (LECLGNG) is inhibits enzyme activity in the absence of bound histone. A Post-SET domain is found at 2066–2082 (GKTVCKCGAPNCSGFLG). The segment at 2091–2111 (ATEEKSKKFKKKQQGKRRTQG) is disordered. Residues 2097 to 2108 (KKFKKKQQGKRR) are compositionally biased toward basic residues. The PHD-type 4; atypical zinc-finger motif lies at 2118-2165 (EDECFSCGDAGQLVSCKKPGCPKVYHADCLNLTKRPAGKWECPWHQCD). Positions 2213–2422 (LEPGEIREYV…SLSQRLPPPE (210 aa)) are disordered. Over residues 2222–2232 (VPPPVPLPPGP) the composition is skewed to pro residues. Positions 2281–2298 (RPLERTDSRPQPLDKVRD) are enriched in basic and acidic residues. Residues 2303–2314 (GTKSQSLVSSQR) are compositionally biased toward polar residues. Residues 2330-2348 (SDKPSPVTSPSSSPSVRSQ) show a composition bias toward low complexity. Residue Ser-2369 is modified to Phosphoserine. Composition is skewed to polar residues over residues 2371-2381 (RPQSLEKTSVP) and 2394-2404 (ITSSPKPQTSD). The residue at position 2462 (Thr-2462) is a Phosphothreonine. 4 disordered regions span residues 2464 to 2499 (RQKERAASPHQVTPQADEKMPVLESSSWPASKGLGH), 2553 to 2575 (TQASGRASAGAEQTPGPLSQSPG), 2595 to 2616 (KSGQSFRSLGKAPASLPTEEKK), and 2665 to 2696 (LGRGQDPKPEQNTLPALNQAPSSHKCAESEQK). Ser-2471 is modified (phosphoserine). A Glycyl lysine isopeptide (Lys-Gly) (interchain with G-Cter in SUMO2) cross-link involves residue Lys-2616. The segment covering 2674–2686 (EQNTLPALNQAPS) has biased composition (polar residues).

Belongs to the class V-like SAM-binding methyltransferase superfamily. In terms of assembly, interacts with the ligand-binding domains of RARA and THRA in the absence of ligand; in the presence of ligand the interaction is severely disrupted but some binding still occurs. Interacts with the ligand-binding domains of RXRA and ESRRA only in the presence of ligand. Interacts with ZNF496. Interacts with AR DNA- and ligand-binding domains. In terms of tissue distribution, expressed in the fetal/adult brain, kidney, skeletal muscle, spleen, and the thymus, and faintly in the lung.

It localises to the nucleus. It is found in the chromosome. It carries out the reaction L-lysyl(36)-[histone H3] + 2 S-adenosyl-L-methionine = N(6),N(6)-dimethyl-L-lysyl(36)-[histone H3] + 2 S-adenosyl-L-homocysteine + 2 H(+). Histone methyltransferase that dimethylates Lys-36 of histone H3 (H3K36me2). Transcriptional intermediary factor capable of both negatively or positively influencing transcription, depending on the cellular context. The sequence is that of Histone-lysine N-methyltransferase, H3 lysine-36 specific (NSD1) from Homo sapiens (Human).